Consider the following 423-residue polypeptide: Chitinase 1 (423 aa).

An N-terminal signal peptide occupies residues 1 to 22; sequence MLSFVKKSIALVAALQAVTALA. The propeptide occupies 23 to 34; that stretch reads TPISSEAGVEKR. The GH18 domain occupies 38–401; the sequence is FANAVYFTNW…STSHQGLGSQ (364 aa). Chitin is bound by residues 102 to 103 and 129 to 132; these read GT and GGWT. E171 (proton donor) is an active-site residue. Chitin is bound by residues Y172, 237 to 240, and W378; that span reads MAYD.

This sequence belongs to the glycosyl hydrolase 18 family. Chitinase class V subfamily.

The protein resides in the secreted. It catalyses the reaction Random endo-hydrolysis of N-acetyl-beta-D-glucosaminide (1-&gt;4)-beta-linkages in chitin and chitodextrins.. This chain is Chitinase 1 (CHI1), found in Aphanocladium album (Wheat rust fungus).